Here is a 187-residue protein sequence, read N- to C-terminus: dTTP/UTP pyrophosphatase (187 aa).

The Proton acceptor role is filled by Asp-65.

The protein belongs to the Maf family. YhdE subfamily. It depends on a divalent metal cation as a cofactor.

It localises to the cytoplasm. The catalysed reaction is dTTP + H2O = dTMP + diphosphate + H(+). It catalyses the reaction UTP + H2O = UMP + diphosphate + H(+). Its function is as follows. Nucleoside triphosphate pyrophosphatase that hydrolyzes dTTP and UTP. May have a dual role in cell division arrest and in preventing the incorporation of modified nucleotides into cellular nucleic acids. This is dTTP/UTP pyrophosphatase from Pyrococcus abyssi (strain GE5 / Orsay).